The primary structure comprises 379 residues: L-lactate dehydrogenase (379 aa).

The FMN hydroxy acid dehydrogenase domain occupies 1-379 (MIISASTDYR…IGRDSLVNLP (379 aa)). A substrate-binding site is contributed by Tyr-24. Positions 106 and 127 each coordinate FMN. Position 129 (Tyr-129) interacts with substrate. Thr-155 contributes to the FMN binding site. Position 164 (Arg-164) interacts with substrate. Lys-251 lines the FMN pocket. His-275 acts as the Proton acceptor in catalysis. Position 278 (Arg-278) interacts with substrate. Residue 306–330 (DSGIRTGLDVVRMLALGADTVLLGR) coordinates FMN.

It belongs to the FMN-dependent alpha-hydroxy acid dehydrogenase family. FMN serves as cofactor.

Its subcellular location is the cell inner membrane. The catalysed reaction is (S)-lactate + A = pyruvate + AH2. Its function is as follows. Catalyzes the conversion of L-lactate to pyruvate. Is coupled to the respiratory chain. The sequence is that of L-lactate dehydrogenase from Stenotrophomonas maltophilia (strain R551-3).